The following is a 316-amino-acid chain: BTB/POZ domain-containing adapter for CUL3-mediated RhoA degradation protein 2 (316 aa).

Positions 28–96 (KYVQLNVGGS…LRDDTVTLPQ (69 aa)) constitute a BTB domain. The span at 268 to 279 (EATSRSRSQASP) shows a compositional bias: polar residues. A disordered region spans residues 268-287 (EATSRSRSQASPSEDEDTFE). Residue Ser278 is modified to Phosphoserine. The residue at position 280 (Ser280) is a Phosphoserine; by CK2.

The protein belongs to the BACURD family. In terms of assembly, component of the BCR(TNFAIP1) E3 ubiquitin ligase complex, at least composed of CUL3, TNFAIP1/BACURD2 and RBX1. Interacts with RHOA; with a preference for RhoA-GDP. Interacts with RHOB. Interacts with CSNK2B. Interacts with PCNA. In terms of processing, phosphorylation at Ser-280 by CK2 facilitates the nucleus localization and increases interaction with PCNA.

The protein resides in the cytoplasm. Its subcellular location is the nucleus. The protein localises to the endosome. Its pathway is protein modification; protein ubiquitination. In terms of biological role, substrate-specific adapter of a BCR (BTB-CUL3-RBX1) E3 ubiquitin-protein ligase complex involved in regulation of cytoskeleton structure. The BCR(TNFAIP1) E3 ubiquitin ligase complex mediates the ubiquitination of RHOA, leading to its degradation by the proteasome, thereby regulating the actin cytoskeleton and cell migration. Its interaction with RHOB may regulate apoptosis. May enhance the PCNA-dependent DNA polymerase delta activity. This is BTB/POZ domain-containing adapter for CUL3-mediated RhoA degradation protein 2 (Tnfaip1) from Rattus norvegicus (Rat).